The following is an 874-amino-acid chain: Collagen alpha-2(I) chain (874 aa).

Residues 1 to 874 (SGGFDFSFLP…FGYEGDFYRA (874 aa)) are disordered. Residues proline 10 and proline 13 each carry the 4-hydroxyproline modification. Lysine 16 is subject to Allysine. Over residues 27–66 (LMGPRGPPGASGAPGPQGFQGPAGEPGEPGQTGPAGARGP) the composition is skewed to low complexity. A 4-hydroxyproline mark is found at proline 34 and proline 40. The residue at position 93 (lysine 93) is a 5-hydroxylysine; alternate. Residue lysine 93 is glycosylated (O-linked (Gal...) hydroxylysine; alternate). Low complexity-rich tracts occupy residues 110–143 (ARGR…SAGP), 188–209 (PGAN…AGAP), and 218–236 (PGPV…AGSK). Positions 237–246 (GESGGKGEPG) are enriched in gly residues. Low complexity predominate over residues 247–257 (SAGPQGPPGSS). A 4-hydroxyproline mark is found at proline 317 and proline 320. 3 stretches are compositionally biased toward low complexity: residues 346 to 365 (LPGI…RGEA), 434 to 451 (PGES…SRGP), and 463 to 473 (EPGVVGAPGTA). Over residues 474-483 (GPAGSGGLPG) the composition is skewed to gly residues. Low complexity-rich tracts occupy residues 491-538 (RGEV…PRGS) and 545-565 (VGPA…QPGA). Basic and acidic residues predominate over residues 566 to 575 (KGERGTKGPK). Low complexity predominate over residues 583-593 (PTGPVGSAGPA). The segment covering 603-612 (GSRGDGGPPG) has biased composition (gly residues). A compositionally biased stretch (low complexity) spans 614–623 (TGFPGAAGRT). Gly residues predominate over residues 648 to 662 (GPVGRGETGAGGPPG). 2 stretches are compositionally biased toward low complexity: residues 663-697 (FTGE…LGLP) and 705-724 (LPGV…AGPP). Over residues 725–744 (GARGDGNPGSDGPPGRGAAG) the composition is skewed to gly residues. Composition is skewed to low complexity over residues 745 to 755 (APGPHGTVGPA) and 763 to 778 (EPGP…ALGP).

This sequence belongs to the fibrillar collagen family. Trimers of one alpha 2(I) and two alpha 1(I) chains. Interacts (via C-terminus) with TMEM131 (via PapD-L domain); the interaction is direct and is involved in assembly and TRAPPIII ER-to-Golgi transport complex-dependent secretion of collagen. Post-translationally, prolines at the third position of the tripeptide repeating unit (G-X-Y) are hydroxylated in some or all of the chains. As to expression, expressed in bones.

The protein localises to the secreted. It localises to the extracellular space. It is found in the extracellular matrix. Functionally, type I collagen is a member of group I collagen (fibrillar forming collagen). The protein is Collagen alpha-2(I) chain of Megalonyx jeffersonii (Jefferson's ground sloth).